A 906-amino-acid chain; its full sequence is MLQSLFKKVFGSRNERLVKQYLQKVKAINALEPAMEQLSDAELAGKTADFKARIEQGTSLDTLLPEAFAVVREAARRVLGLRHYDVQMVGGMVLHDGKIAEMRTGEGKTLMATLPAYLNALAGKGVHVVTVNDYLARRDAEWMGRVYGFLGLTTGVNLSHMPHAEKQAAYAADITYGTNNEYGFDYLRDNMVFEVGEKVQRPLAFGVIDEVDSILIDEARTPLIISGQSEENTALYQQVNLVPPRLTRQKDEESEGDYSVDEKSRQVLLSEAGHEKVEEILTEMGLLQPGGSLYDASNIMLMHHVYAALRAHALFFKDQHYVVQNGEVVIVDEFTGRLMSGRRWSEGLHQAVEAKEGVAIQKENQTLASITFQNFFRMYEKLSGMTGTADTEAFEFQSIYGLETVVIPTHRPMIRKDEHDQVYRTGRERDQAVINDVRACHERGQPVLVGTTSIEANEKLSAELKKAGLPHNVLNAKQHASEAEVIAQAGLPGAVTIATNMAGRGTDIVLGGSIQKEVDAIRNDAALADGEKDARITALKADWQTRHDAVLAAGGLHIIGTERHESRRVDNQLRGRSGRQGDPGSSRFFLSLEDPLLRIFASDRVAAIMNRLKMPEGEAIEHPWVTRAIENAQRKVEQRNFDIRKQLLEYDDVSNDQRKVIYEQRNELLASVEIGDTIRAMRYDVLGETIDQHIAPGSMDEQWDVAGLEKTLAAQFTLELPLRQWLDEDKTLNEEGLRKKILAAADAAYAEKEALVGAEGLRRFERAVMLQSLDTHWREHLSALDHLRQGIHLRGYAQKQPKQEYKREAFELFSAMLAAIKAEVTQITTTVQVRAPEDVQAVELHEEPSNVQYEHAGYDEGADFAAAESAEAAPSGPVHVGPKVGRNDPCPCGSGKKYKQCHGKLA.

ATP-binding positions include Gln87, 105–109 (GEGKT), and Asp507. Residues Cys890, Cys892, Cys901, and His902 each coordinate Zn(2+).

Belongs to the SecA family. As to quaternary structure, monomer and homodimer. Part of the essential Sec protein translocation apparatus which comprises SecA, SecYEG and auxiliary proteins SecDF-YajC and YidC. Zn(2+) is required as a cofactor.

The protein resides in the cell inner membrane. It is found in the cytoplasm. The catalysed reaction is ATP + H2O + cellular proteinSide 1 = ADP + phosphate + cellular proteinSide 2.. Functionally, part of the Sec protein translocase complex. Interacts with the SecYEG preprotein conducting channel. Has a central role in coupling the hydrolysis of ATP to the transfer of proteins into and across the cell membrane, serving both as a receptor for the preprotein-SecB complex and as an ATP-driven molecular motor driving the stepwise translocation of polypeptide chains across the membrane. This chain is Protein translocase subunit SecA, found in Thiobacillus denitrificans (strain ATCC 25259 / T1).